The chain runs to 432 residues: Asparagine--tRNA ligase (432 aa).

Belongs to the class-II aminoacyl-tRNA synthetase family. As to quaternary structure, homodimer.

It localises to the cytoplasm. The enzyme catalyses tRNA(Asn) + L-asparagine + ATP = L-asparaginyl-tRNA(Asn) + AMP + diphosphate + H(+). The polypeptide is Asparagine--tRNA ligase (Lacticaseibacillus paracasei (strain ATCC 334 / BCRC 17002 / CCUG 31169 / CIP 107868 / KCTC 3260 / NRRL B-441) (Lactobacillus paracasei)).